The following is a 342-amino-acid chain: Ribosomal RNA small subunit methyltransferase C (342 aa).

It belongs to the methyltransferase superfamily. RsmC family. As to quaternary structure, monomer.

It localises to the cytoplasm. The enzyme catalyses guanosine(1207) in 16S rRNA + S-adenosyl-L-methionine = N(2)-methylguanosine(1207) in 16S rRNA + S-adenosyl-L-homocysteine + H(+). Functionally, specifically methylates the guanine in position 1207 of 16S rRNA in the 30S particle. In Salmonella typhi, this protein is Ribosomal RNA small subunit methyltransferase C.